Reading from the N-terminus, the 326-residue chain is Adenosine receptor A1 (326 aa).

Over 1 to 10 (MPPYISAFQA) the chain is Extracellular. The helical transmembrane segment at 11 to 33 (AYIGIEVLIALVSVPGNVLVIWA) threads the bilayer. Residues 34–46 (VKVNQALRDATFC) are Cytoplasmic-facing. Residues 47–69 (FIVSLAVADVAVGALVIPLAILI) traverse the membrane as a helical segment. The Extracellular segment spans residues 70-80 (NIGPQTYFHTC). Cysteines 80 and 169 form a disulfide. The chain crosses the membrane as a helical span at residues 81–102 (LMVACPVLILTQSSILALLAIA). Over 103-123 (VDRYLRVKIPLRYKTVVTQRR) the chain is Cytoplasmic. Residues 124–146 (AAVAIAGCWILSLVVGLTPMFGW) traverse the membrane as a helical segment. Residues 147–176 (NNLSEVEQAWIANGSVGEPVIKCEFEKVIS) are Extracellular-facing. Residues Asn148 and Asn159 are each glycosylated (N-linked (GlcNAc...) asparagine). Residues 177–201 (MEYMVYFNFFVWVLPPLLLMVLIYL) traverse the membrane as a helical segment. Residues 202–235 (EVFYLIRKQLNKKVSASSGDPQKYYGKELKIAKS) lie on the Cytoplasmic side of the membrane. The chain crosses the membrane as a helical span at residues 236–259 (LALILFLFALSWLPLHILNCITLF). Residues 260–267 (CPTCQKPS) are Extracellular-facing. The helical transmembrane segment at 268-292 (ILIYIAIFLTHGNSAMNPIVYAFRI) threads the bilayer. Over 293 to 326 (HKFRVTFLKIWNDHFRCQPKPPIEEDIPEEKADD) the chain is Cytoplasmic. Cys309 carries S-palmitoyl cysteine lipidation.

This sequence belongs to the G-protein coupled receptor 1 family.

It is found in the cell membrane. In terms of biological role, receptor for adenosine. The activity of this receptor is mediated by G proteins which inhibit adenylyl cyclase. The sequence is that of Adenosine receptor A1 (Adora1) from Mus musculus (Mouse).